Consider the following 179-residue polypeptide: 5'-deoxynucleotidase VV1_0013 (179 aa).

H53 is a binding site for a divalent metal cation. Residues 62–65 and D122 contribute to the substrate site; that span reads DLPT. D122 provides a ligand contact to a divalent metal cation.

The protein belongs to the 5DNU family. In terms of assembly, homodimer. Requires a divalent metal cation as cofactor.

It is found in the cytoplasm. It carries out the reaction a 2'-deoxyribonucleoside 5'-phosphate + H2O = a 2'-deoxyribonucleoside + phosphate. In terms of biological role, catalyzes the strictly specific dephosphorylation of 2'-deoxyribonucleoside 5'-monophosphates. The sequence is that of 5'-deoxynucleotidase VV1_0013 from Vibrio vulnificus (strain CMCP6).